The following is a 119-amino-acid chain: Ribonuclease P protein component (119 aa).

It belongs to the RnpA family. As to quaternary structure, consists of a catalytic RNA component (M1 or rnpB) and a protein subunit.

The enzyme catalyses Endonucleolytic cleavage of RNA, removing 5'-extranucleotides from tRNA precursor.. RNaseP catalyzes the removal of the 5'-leader sequence from pre-tRNA to produce the mature 5'-terminus. It can also cleave other RNA substrates such as 4.5S RNA. The protein component plays an auxiliary but essential role in vivo by binding to the 5'-leader sequence and broadening the substrate specificity of the ribozyme. In Borreliella burgdorferi (strain ZS7) (Borrelia burgdorferi), this protein is Ribonuclease P protein component.